The primary structure comprises 317 residues: Beta-ketoacyl-[acyl-carrier-protein] synthase III (317 aa).

Active-site residues include Cys-112 and His-244. The tract at residues 245-249 (QANLR) is ACP-binding. Asn-274 is a catalytic residue.

This sequence belongs to the thiolase-like superfamily. FabH family. Homodimer.

Its subcellular location is the cytoplasm. It carries out the reaction malonyl-[ACP] + acetyl-CoA + H(+) = 3-oxobutanoyl-[ACP] + CO2 + CoA. It participates in lipid metabolism; fatty acid biosynthesis. Its function is as follows. Catalyzes the condensation reaction of fatty acid synthesis by the addition to an acyl acceptor of two carbons from malonyl-ACP. Catalyzes the first condensation reaction which initiates fatty acid synthesis and may therefore play a role in governing the total rate of fatty acid production. Possesses both acetoacetyl-ACP synthase and acetyl transacylase activities. Its substrate specificity determines the biosynthesis of branched-chain and/or straight-chain of fatty acids. The polypeptide is Beta-ketoacyl-[acyl-carrier-protein] synthase III (Shigella sonnei (strain Ss046)).